We begin with the raw amino-acid sequence, 31 residues long: MCLLVIKSVMLSIVISLRRLLDYLDLTLQVL.

This is an uncharacterized protein from Chlamydia phage 1 (Bacteriophage Chp1).